The primary structure comprises 92 residues: MLCSIYKSPKKEGTYLYIPKRDDFSQVPDTLKQMFGKPIFVMLVNLEQRQLAQVNVEKVKQSMQEQGFFLQLPPPPENLLEQHKERKARQTP.

The YcgL domain occupies 1-84 (MLCSIYKSPK…PPENLLEQHK (84 aa)). The segment at 71-92 (QLPPPPENLLEQHKERKARQTP) is disordered.

The sequence is that of YcgL domain-containing protein VC0395_A1544/VC395_2072 from Vibrio cholerae serotype O1 (strain ATCC 39541 / Classical Ogawa 395 / O395).